Consider the following 305-residue polypeptide: Acyl transferase (305 aa).

Catalysis depends on charge relay system residues S114, D211, and H241.

The protein belongs to the LuxD family.

It functions in the pathway lipid metabolism; fatty acid reduction for biolumincescence. In terms of biological role, acyl transferase is part of the fatty acid reductase system required for aldehyde biosynthesis; it produces fatty acids for the luminescent reaction. In Vibrio harveyi (Beneckea harveyi), this protein is Acyl transferase (luxD).